The following is a 243-amino-acid chain: MSKTHFGFESVEENEKAKKVAGVFHSVASNYDLMNDLMSAGMHRAWKAFTIAQANVRPGFKVLDIAAGTGDLTKSFAKAAGPTGEVWHTDINESMLRVGRDRLLDKGIVTPSLLCDAEKIPFPDNYFDVVTVAFGLRNMTHKDAALAEMRRVTKPGGRVMVLEFSKVWDPLKKAYDLYSFKVLPWLGDKFAKDAESYRYLAESIRMHPDQDTLKTMMEQAGLDAVKYYNLSGGVVALHLGTKY.

Residues Thr69, Asp90, and 116–117 (DA) contribute to the S-adenosyl-L-methionine site.

It belongs to the class I-like SAM-binding methyltransferase superfamily. MenG/UbiE family.

It catalyses the reaction a 2-demethylmenaquinol + S-adenosyl-L-methionine = a menaquinol + S-adenosyl-L-homocysteine + H(+). It carries out the reaction a 2-methoxy-6-(all-trans-polyprenyl)benzene-1,4-diol + S-adenosyl-L-methionine = a 5-methoxy-2-methyl-3-(all-trans-polyprenyl)benzene-1,4-diol + S-adenosyl-L-homocysteine + H(+). The protein operates within quinol/quinone metabolism; menaquinone biosynthesis; menaquinol from 1,4-dihydroxy-2-naphthoate: step 2/2. It functions in the pathway cofactor biosynthesis; ubiquinone biosynthesis. Functionally, methyltransferase required for the conversion of demethylmenaquinol (DMKH2) to menaquinol (MKH2) and the conversion of 2-polyprenyl-6-methoxy-1,4-benzoquinol (DDMQH2) to 2-polyprenyl-3-methyl-6-methoxy-1,4-benzoquinol (DMQH2). The sequence is that of Ubiquinone/menaquinone biosynthesis C-methyltransferase UbiE from Burkholderia cenocepacia (strain HI2424).